The primary structure comprises 632 residues: Probable potassium transport system protein Kup (632 aa).

12 helical membrane-spanning segments follow: residues 17-37, 60-80, 106-126, 146-166, 175-195, 210-230, 254-274, 292-312, 344-364, 370-390, 401-421, and 426-446; these read LFYLTLGSIGVVYGDIGTSPL, LISLMIWALTIIVTIKYVLFL, TAILMLLGLLGAALFLGDAMI, LSEYIVPISVVILALLFVVQS, FFGPITAVWFLVMAAAGISHI, AVSFLLHEGFYGVVVLGAVFL, WFLLVFPSLTLNYLGQGALVL, ALLPVVILATAATIIASQAVI, IFVPSVNAVLFIGVIFLVLSF, LATAYGISVTGAMVVTSIMAF, LPVAVIALAPLVILELIFLGA, and IHDGGYIPILIATAFTVIMWT.

Belongs to the HAK/KUP transporter (TC 2.A.72) family.

The protein localises to the cell inner membrane. The catalysed reaction is K(+)(in) + H(+)(in) = K(+)(out) + H(+)(out). Its function is as follows. Transport of potassium into the cell. Likely operates as a K(+):H(+) symporter. The polypeptide is Probable potassium transport system protein Kup (Rhizobium rhizogenes (Agrobacterium rhizogenes)).